The primary structure comprises 61 residues: Antimicrobial peptide 1 (61 aa).

The signal sequence occupies residues 1-24 (LPVAFLKFAIVLILFIAMSAMIEA). Gln-25 is modified (pyrrolidone carboxylic acid). Disulfide bonds link Cys-26/Cys-43, Cys-33/Cys-47, and Cys-42/Cys-58.

The protein belongs to the AMP family. Homodimer. Post-translationally, three disulfide bonds are present. As to expression, found only in seeds.

Its subcellular location is the secreted. In terms of biological role, possesses antifungal activity and is also active on two tested Gram-positive bacteria but is non-toxic for Gram-negative bacteria and cultured human cells. The polypeptide is Antimicrobial peptide 1 (AMP1) (Mirabilis jalapa (Garden four-o'clock)).